Consider the following 484-residue polypeptide: Serine protease HTR4 (484 aa).

An N-terminal signal peptide occupies residues 1 to 28; that stretch reads MARPLQRPAGLGPFVLLWLLLPAPSGRG. Positions 36 to 114 constitute an IGFBP N-terminal domain; it reads PVPRCPAACE…GRPLGTCGCP (79 aa). Intrachain disulfides connect Cys40/Cys66, Cys44/Cys68, Cys49/Cys69, Cys55/Cys72, Cys80/Cys94, Cys88/Cys111, Cys113/Cys132, and Cys121/Cys157. In terms of domain architecture, Kazal-like spans 105–159; it reads GRPLGTCGCPAAGATVCGSDGRTYRSLCALRAENRAARLRGALPAVPVQKGDCGD. Positions 209 to 369 are serine protease; it reads ASGFIVSEDG…IPSDRIRQFL (161 aa). Residues His225, Asp255, and Ser333 each act as charge relay system in the active site. Residues 390-472 form the PDZ domain; that stretch reads LRMLPLTMNL…LSLLVRRKSQ (83 aa).

This sequence belongs to the peptidase S1C family.

It localises to the secreted. In terms of biological role, serine protease. This chain is Serine protease HTR4 (HTRA4), found in Bos taurus (Bovine).